A 41-amino-acid polypeptide reads, in one-letter code: MKIKNSLKSLKARHRDNRLVRRKGRMYIINKLNPRFKARQG.

This sequence belongs to the bacterial ribosomal protein bL36 family.

This is Large ribosomal subunit protein bL36 from Rhizobium rhizogenes (strain K84 / ATCC BAA-868) (Agrobacterium radiobacter).